Reading from the N-terminus, the 473-residue chain is Ribulose bisphosphate carboxylase large chain 1 (473 aa).

The substrate site is built by Asn116 and Thr166. Lys168 serves as the catalytic Proton acceptor. Lys170 is a binding site for substrate. Mg(2+)-binding residues include Lys194, Asp196, and Glu197. Position 194 is an N6-carboxylysine (Lys194). The Proton acceptor role is filled by His287. Substrate contacts are provided by Arg288, His320, and Ser372.

Belongs to the RuBisCO large chain family. Type I subfamily. In terms of assembly, heterohexadecamer of 8 large chains and 8 small chains. The cofactor is Mg(2+).

The enzyme catalyses 2 (2R)-3-phosphoglycerate + 2 H(+) = D-ribulose 1,5-bisphosphate + CO2 + H2O. It carries out the reaction D-ribulose 1,5-bisphosphate + O2 = 2-phosphoglycolate + (2R)-3-phosphoglycerate + 2 H(+). Its function is as follows. RuBisCO catalyzes two reactions: the carboxylation of D-ribulose 1,5-bisphosphate, the primary event in carbon dioxide fixation, as well as the oxidative fragmentation of the pentose substrate. Both reactions occur simultaneously and in competition at the same active site. The chain is Ribulose bisphosphate carboxylase large chain 1 from Acidithiobacillus ferrooxidans (Thiobacillus ferrooxidans).